A 328-amino-acid chain; its full sequence is Phosphate acyltransferase (328 aa).

The protein belongs to the PlsX family. Homodimer. Probably interacts with PlsY.

It is found in the cytoplasm. It catalyses the reaction a fatty acyl-[ACP] + phosphate = an acyl phosphate + holo-[ACP]. It functions in the pathway lipid metabolism; phospholipid metabolism. Functionally, catalyzes the reversible formation of acyl-phosphate (acyl-PO(4)) from acyl-[acyl-carrier-protein] (acyl-ACP). This enzyme utilizes acyl-ACP as fatty acyl donor, but not acyl-CoA. This Staphylococcus haemolyticus (strain JCSC1435) protein is Phosphate acyltransferase.